The sequence spans 609 residues: D-apionate lactonase (609 aa).

The catalysed reaction is D-apionolactone + H2O = D-apionate + H(+). The protein operates within carbohydrate metabolism. Functionally, involved in catabolism of D-apiose. Hydrolyzes D-apionolactone to D-apionate. This Brucella anthropi (strain ATCC 49188 / DSM 6882 / CCUG 24695 / JCM 21032 / LMG 3331 / NBRC 15819 / NCTC 12168 / Alc 37) (Ochrobactrum anthropi) protein is D-apionate lactonase.